Consider the following 369-residue polypeptide: N-succinyl-L-Arg/Lys racemase (369 aa).

Substrate contacts are provided by residues Tyr26, Asp51, 161–163 (KMK), and 191–193 (DVN). Residues Asp191, Glu218, and Asp243 each coordinate Mg(2+). Residues Lys267, 295–296 (SM), and 320–322 (ELT) contribute to the substrate site.

It belongs to the mandelate racemase/muconate lactonizing enzyme family. Mg(2+) serves as cofactor.

Its function is as follows. Catalyzes efficient racemization of N-succinyl-L-Arg and N-succinyl-L-Lys, suggesting that these are physiological substrates of this enzyme. Has low activity with L-Asp-L-Lys, and even lower activity with L-Leu-L-Arg, L-Leu-L-Lys, N-succinyl-L-His and N-succinyl-L-Met (in vitro). The protein is N-succinyl-L-Arg/Lys racemase of Bacillus cereus (strain ATCC 14579 / DSM 31 / CCUG 7414 / JCM 2152 / NBRC 15305 / NCIMB 9373 / NCTC 2599 / NRRL B-3711).